Here is a 168-residue protein sequence, read N- to C-terminus: Xanthine-guanine phosphoribosyltransferase (168 aa).

5-phospho-alpha-D-ribose 1-diphosphate contacts are provided by residues 43–44 (RG) and 102–110 (DDLVDTGAT). A Mg(2+)-binding site is contributed by D103. Guanine is bound by residues D106 and I149. Positions 106 and 149 each coordinate xanthine. GMP-binding positions include 106-110 (DTGAT) and 148-149 (WI).

The protein belongs to the purine/pyrimidine phosphoribosyltransferase family. XGPT subfamily. As to quaternary structure, homotetramer. Requires Mg(2+) as cofactor.

It is found in the cell inner membrane. The enzyme catalyses GMP + diphosphate = guanine + 5-phospho-alpha-D-ribose 1-diphosphate. It carries out the reaction XMP + diphosphate = xanthine + 5-phospho-alpha-D-ribose 1-diphosphate. It catalyses the reaction IMP + diphosphate = hypoxanthine + 5-phospho-alpha-D-ribose 1-diphosphate. It participates in purine metabolism; GMP biosynthesis via salvage pathway; GMP from guanine: step 1/1. It functions in the pathway purine metabolism; XMP biosynthesis via salvage pathway; XMP from xanthine: step 1/1. Its function is as follows. Purine salvage pathway enzyme that catalyzes the transfer of the ribosyl-5-phosphate group from 5-phospho-alpha-D-ribose 1-diphosphate (PRPP) to the N9 position of the 6-oxopurines guanine and xanthine to form the corresponding ribonucleotides GMP (guanosine 5'-monophosphate) and XMP (xanthosine 5'-monophosphate), with the release of PPi. To a lesser extent, also acts on hypoxanthine. This Nitrobacter winogradskyi (strain ATCC 25391 / DSM 10237 / CIP 104748 / NCIMB 11846 / Nb-255) protein is Xanthine-guanine phosphoribosyltransferase.